A 1795-amino-acid polypeptide reads, in one-letter code: Type III effector AvrE (1795 aa).

Polar residues predominate over residues 1 to 18; that stretch reads MQSPSIHRNTGSIIQPTV. The interval 1-227 is disordered; sequence MQSPSIHRNT…PPREPMLWRS (227 aa). Positions 60–75 are enriched in low complexity; sequence KSKAPQQKAATPPTAK. 2 stretches are compositionally biased toward polar residues: residues 97–109 and 117–127; these read GFSNSSPQNTHSA and HPNQASSSGAQ. A compositionally biased stretch (basic and acidic residues) spans 129 to 154; sequence HEIHPEAAPRKNLRVRFDLPQDRLER. The span at 174–191 shows a compositional bias: polar residues; it reads ATRQFRSPDSHLQGSDGT. The span at 203-215 shows a compositional bias: low complexity; it reads PSSSGSKIGDSDG. 2 short sequence motifs (wxxxE) span residues 393-397 and 829-833; these read WKIPE and WQRFE. A disordered region spans residues 1461–1488; the sequence is QIGGSHTAPTGTPASAPGPTPASQTAAN. A compositionally biased stretch (low complexity) spans 1467 to 1487; sequence TAPTGTPASAPGPTPASQTAA. The ERMRS signature appears at 1787 to 1790; the sequence is KKEG.

The protein belongs to the AvrE family. In planta interaction assays, interacts with the A.thaliana protein phosphatase 2A (PP2A) via direct interaction/association with specific B' regulatory subunits.

It localises to the secreted. The protein resides in the host cell. The protein localises to the host cell membrane. With respect to regulation, polyamidoamine dendrimers inhibit channel and virulence activities. Functionally, major virulence factor that may function as a water- and solute-permeable channel dedicated to creating osmotic/water potential perturbation and a water- and nutrient-rich apoplast in which bacteria multiply within the infected plant tissues. Expression in Xenopus oocytes results in inward and outward currents, permeability to water and osmolarity-dependent oocyte swelling and bursting. In terms of biological role, elicits cell death in host tomato leaves and in non-host Nicotiana tabacum leaves. Acts within plant cells and promotes lesion formation. The combined action of AvrE and HopM1 is particularly important in promoting bacterial growth in plants. Contributes to the down-regulation of a specific subset of A.thaliana genes during infection, including NHL13, which is required for antibacterial immunity. In Pseudomonas syringae pv. tomato (strain ATCC BAA-871 / DC3000), this protein is Type III effector AvrE.